The primary structure comprises 234 residues: Octanoyltransferase (234 aa).

Residues 43–231 (IPTRNYFLFV…HFQELFQAEL (189 aa)) form the BPL/LPL catalytic domain. Substrate is bound by residues 88-95 (RGGDITYH), 160-162 (AMG), and 173-175 (GFA). The active-site Acyl-thioester intermediate is the Cys191.

Belongs to the LipB family.

It localises to the cytoplasm. The catalysed reaction is octanoyl-[ACP] + L-lysyl-[protein] = N(6)-octanoyl-L-lysyl-[protein] + holo-[ACP] + H(+). Its pathway is protein modification; protein lipoylation via endogenous pathway; protein N(6)-(lipoyl)lysine from octanoyl-[acyl-carrier-protein]: step 1/2. Its function is as follows. Catalyzes the transfer of endogenously produced octanoic acid from octanoyl-acyl-carrier-protein onto the lipoyl domains of lipoate-dependent enzymes. Lipoyl-ACP can also act as a substrate although octanoyl-ACP is likely to be the physiological substrate. The sequence is that of Octanoyltransferase from Christiangramia forsetii (strain DSM 17595 / CGMCC 1.15422 / KT0803) (Gramella forsetii).